A 271-amino-acid polypeptide reads, in one-letter code: Thioredoxin-related transmembrane protein 2 homolog (271 aa).

Positions 1 to 28 are cleaved as a signal peptide; sequence MTWKKQMALLAKPYYWVNILLAISYLLA. Residues 29-102 are Extracellular-facing; that stretch reads KKTQFICTRL…AILWAYADFR (74 aa). The chain crosses the membrane as a helical span at residues 103–123; it reads YGLGFLLLCVLVGMVLPEPSY. Positions 112–262 constitute a Thioredoxin domain; it reads VLVGMVLPEP…YKEAIERLPI (151 aa). Residues 124-271 are Cytoplasmic-facing; the sequence is RGPEHITYFR…IAPKEAKKVQ (148 aa). Positions 268-271 match the Di-lysine motif motif; it reads KKVQ.

The protein localises to the membrane. This chain is Thioredoxin-related transmembrane protein 2 homolog, found in Drosophila melanogaster (Fruit fly).